We begin with the raw amino-acid sequence, 1042 residues long: Glutamate dehydrogenase 2 (1042 aa).

Lys-596 is a catalytic residue. Arg-763 carries the post-translational modification ADP-ribosylarginine; by Legionella Lart1.

This sequence belongs to the Glu/Leu/Phe/Val dehydrogenases family. In terms of assembly, homodimer. (Microbial infection) ADP-ribosylated at Arg-763 by the Legionella pneumophila effector Lart1, which inhibits the glutamate dehydrogenase activity. Amoeba are natural hosts of Legionella, and ADP-ribosylation by Lart1 may promote Legionella parasitism.

Its subcellular location is the cytoplasm. The catalysed reaction is L-glutamate + NAD(+) + H2O = 2-oxoglutarate + NH4(+) + NADH + H(+). Its activity is regulated as follows. Activity is stimulated by AMP. With respect to regulation, (Microbial infection) Inhibited by ADP-ribosylation. The sequence is that of Glutamate dehydrogenase 2 (glud2) from Dictyostelium discoideum (Social amoeba).